The chain runs to 94 residues: Integration host factor subunit beta (94 aa).

Belongs to the bacterial histone-like protein family. Heterodimer of an alpha and a beta chain.

Functionally, this protein is one of the two subunits of integration host factor, a specific DNA-binding protein that functions in genetic recombination as well as in transcriptional and translational control. The chain is Integration host factor subunit beta from Sodalis glossinidius (strain morsitans).